Consider the following 398-residue polypeptide: Phosphoglycerate kinase (398 aa).

Substrate-binding positions include 21–23 (DFN), Arg36, 59–62 (HFGR), Arg117, and Arg150. Residues Lys200, Glu321, and 351–354 (GGDS) contribute to the ATP site.

It belongs to the phosphoglycerate kinase family. As to quaternary structure, monomer.

The protein resides in the cytoplasm. The enzyme catalyses (2R)-3-phosphoglycerate + ATP = (2R)-3-phospho-glyceroyl phosphate + ADP. It participates in carbohydrate degradation; glycolysis; pyruvate from D-glyceraldehyde 3-phosphate: step 2/5. The polypeptide is Phosphoglycerate kinase (Wolbachia pipientis wMel).